The sequence spans 501 residues: E3 ubiquitin-protein ligase TRIM35 (501 aa).

Met1 is subject to N-acetylmethionine. Ser8 carries the post-translational modification Phosphoserine. The RING-type zinc-finger motif lies at Cys21 to Lys61. A B box-type zinc finger spans residues Arg96–Ile137. The Zn(2+) site is built by Cys101, His104, Cys123, and His129. The stretch at Met209–Phe252 forms a coiled coil. The 212-residue stretch at Leu284 to Ile495 folds into the B30.2/SPRY domain.

Interacts with PKM isoform M2, but not isoform M1; this interaction may compete with that between PKM and FGFR1, and hence reduces FGFR1-dependent tyrosine phosphorylation of PKM. Interacts with IRF7; this interaction promotes IRF7 proteasomal degradation. Interacts with TRAF3; this interaction promotes TRAF3 activation.

The protein resides in the cytoplasm. It is found in the nucleus. The catalysed reaction is S-ubiquitinyl-[E2 ubiquitin-conjugating enzyme]-L-cysteine + [acceptor protein]-L-lysine = [E2 ubiquitin-conjugating enzyme]-L-cysteine + N(6)-ubiquitinyl-[acceptor protein]-L-lysine.. Its pathway is protein modification; protein ubiquitination. In terms of biological role, E3 ubiquitin-protein ligase that participates in multiple biological processes including cell death, glucose metabolism, and in particular, the innate immune response. Mediates 'Lys-63'-linked polyubiquitination of TRAF3 thereby promoting type I interferon production via RIG-I signaling pathway. Can also catalyze 'Lys-48'-linked polyubiquitination and proteasomal degradation of viral proteins such as influenza virus PB2. Acts as a negative feedback regulator of TLR7- and TLR9-triggered signaling. Mechanistically, promotes the 'Lys-48'-linked ubiquitination of IRF7 and induces its degradation via a proteasome-dependent pathway. Reduces FGFR1-dependent tyrosine phosphorylation of PKM, inhibiting PKM-dependent lactate production, glucose metabolism, and cell growth. This is E3 ubiquitin-protein ligase TRIM35 (Trim35) from Rattus norvegicus (Rat).